Reading from the N-terminus, the 152-residue chain is Transcription factor ATOH7 (152 aa).

The 53-residue stretch at 40–92 folds into the bHLH domain; that stretch reads RRRLAANARERRRMQGLNTAFDRLRRVVPQWGQDKKLSKYETLQMALSYIMAL.

As to quaternary structure, forms a heterodimer with TCF3 isoform E47; interaction may be required for DNA-binding in certain situations.

Its subcellular location is the nucleus. It is found in the perikaryon. The protein localises to the cell projection. The protein resides in the axon. Transcription factor that binds to DNA at the consensus sequence 5'-CAG[GC]TG-3'. Dimerization with TCF3 isoform E47 may be required in certain situations. Binds to gene promoters and enhancer elements, and thereby regulates a transcriptional program of retinal ganglion cell (RGC) determinant genes. Although the exact mechanism is not certain, retinal transcription regulation by ATOH7 has a role in RGC determination and survival, photoreceptor population development, targeting of RGC axons to the optic nerve and development of the retino-hypothalamic tract. Binds to its own promoter and enhancer sequences, suggesting autoregulation of ATOH7 transcription. Required for retinal circadian rhythm photoentrainment. Plays a role in brainstem auditory signaling and binaural processing. The sequence is that of Transcription factor ATOH7 from Homo sapiens (Human).